The primary structure comprises 308 residues: 4-hydroxy-tetrahydrodipicolinate synthase (308 aa).

Thr53 lines the pyruvate pocket. Tyr141 functions as the Proton donor/acceptor in the catalytic mechanism. Catalysis depends on Lys169, which acts as the Schiff-base intermediate with substrate. Val209 contributes to the pyruvate binding site.

This sequence belongs to the DapA family. In terms of assembly, homotetramer; dimer of dimers.

It is found in the cytoplasm. The enzyme catalyses L-aspartate 4-semialdehyde + pyruvate = (2S,4S)-4-hydroxy-2,3,4,5-tetrahydrodipicolinate + H2O + H(+). The protein operates within amino-acid biosynthesis; L-lysine biosynthesis via DAP pathway; (S)-tetrahydrodipicolinate from L-aspartate: step 3/4. Its function is as follows. Catalyzes the condensation of (S)-aspartate-beta-semialdehyde [(S)-ASA] and pyruvate to 4-hydroxy-tetrahydrodipicolinate (HTPA). This chain is 4-hydroxy-tetrahydrodipicolinate synthase, found in Acidothermus cellulolyticus (strain ATCC 43068 / DSM 8971 / 11B).